A 152-amino-acid chain; its full sequence is 3-hydroxyacyl-[acyl-carrier-protein] dehydratase FabZ (152 aa).

His-58 is an active-site residue.

This sequence belongs to the thioester dehydratase family. FabZ subfamily.

The protein localises to the cytoplasm. It carries out the reaction a (3R)-hydroxyacyl-[ACP] = a (2E)-enoyl-[ACP] + H2O. Involved in unsaturated fatty acids biosynthesis. Catalyzes the dehydration of short chain beta-hydroxyacyl-ACPs and long chain saturated and unsaturated beta-hydroxyacyl-ACPs. This Prochlorococcus marinus (strain MIT 9215) protein is 3-hydroxyacyl-[acyl-carrier-protein] dehydratase FabZ.